The chain runs to 276 residues: Dermonecrotic toxin LsaSicTox-alphaIB2i (276 aa).

The active site involves His5. Positions 25 and 27 each coordinate Mg(2+). His41 functions as the Nucleophile in the catalytic mechanism. Disulfide bonds link Cys45–Cys51 and Cys47–Cys190. Mg(2+) is bound at residue Asp85. 2 N-linked (GlcNAc...) asparagine glycosylation sites follow: Asn129 and Asn253.

The protein belongs to the arthropod phospholipase D family. Class II subfamily. Requires Mg(2+) as cofactor. Expressed by the venom gland.

The protein localises to the secreted. It carries out the reaction an N-(acyl)-sphingosylphosphocholine = an N-(acyl)-sphingosyl-1,3-cyclic phosphate + choline. The catalysed reaction is an N-(acyl)-sphingosylphosphoethanolamine = an N-(acyl)-sphingosyl-1,3-cyclic phosphate + ethanolamine. It catalyses the reaction a 1-acyl-sn-glycero-3-phosphocholine = a 1-acyl-sn-glycero-2,3-cyclic phosphate + choline. The enzyme catalyses a 1-acyl-sn-glycero-3-phosphoethanolamine = a 1-acyl-sn-glycero-2,3-cyclic phosphate + ethanolamine. Functionally, dermonecrotic toxins cleave the phosphodiester linkage between the phosphate and headgroup of certain phospholipids (sphingolipid and lysolipid substrates), forming an alcohol (often choline) and a cyclic phosphate. This toxin acts on sphingomyelin (SM). It may also act on ceramide phosphoethanolamine (CPE), lysophosphatidylcholine (LPC) and lysophosphatidylethanolamine (LPE), but not on lysophosphatidylserine (LPS), and lysophosphatidylglycerol (LPG). It acts by transphosphatidylation, releasing exclusively cyclic phosphate products as second products. Induces dermonecrosis, hemolysis, increased vascular permeability, edema, inflammatory response, and platelet aggregation. In Loxosceles sabina (Tucson recluse spider), this protein is Dermonecrotic toxin LsaSicTox-alphaIB2i.